Reading from the N-terminus, the 529-residue chain is MKKIMLVFITLILVSLPIAQQTEAKDASAFNKENLISSIAPPASPPASPKTPIEKKHADEIDKYIQGLDYNKNNVLVYHGDAVTNVPPRKGYKDGNEYIVVEKKKKSINQNNADIQVVNAISSLTYPGALVKANSELVENQPDVLPVKRDSLTLSIDLPGMTNQDNKIVVKNATKSNVNNAVNTLVERWNEKYAQAYPNVSAKIDYDDEMAYSESQLIAKFGTAFKAVNNSLNVNFGAISEGKMQEEVISFKQIYYNVNVNEPTRPSRFFGKAVTKEQLQALGVNAENPPAYISSVAYGRQVYLKLSTNSHSTKVKAAFDAAVSGKSVSGDVELTNIIKNSSFKAVIYGGSAKDEVQIIDGNLGDLRDILKKGATFNRETPGVPIAYTTNFLKDNELAVIKNNSEYIETTSKAYTDGKINIDHSGGYVAQFNISWDEINYDPEGNEIVQHKNWSENNKSKLAHFTSSIYLPGNARNINVYAKECTGLAWEWWRTVIDDRNLPLVKNRNISIWGTTLYPKYSNSVDNPIE.

The signal sequence occupies residues 1–24 (MKKIMLVFITLILVSLPIAQQTEA). Transmembrane regions (beta stranded) follow at residues 214 to 227 (ESQL…AFKA), 234 to 243 (VNFGAISEGK), 312 to 321 (STKVKAAFDA), and 329 to 341 (SGDV…IKNS). Positions 483–493 (ECTGLAWEWWR) match the Conserved undecapeptide motif. The Cholesterol binding signature appears at 515–516 (TL).

The protein belongs to the cholesterol-dependent cytolysin family. Homooligomeric pore complex of 35 to 50 subunits; when inserted in the host membrane.

The protein resides in the secreted. Its subcellular location is the host membrane. The protein localises to the host cell membrane. With respect to regulation, activity of listeriolysin O is regulated on multiple levels. It should be high in the phagosome, thereby allowing escape of the bacteria from the phagosomal compartment. Then, once inside the host cytosol, the activity must be controlled to prevent lysis of the host plasma membrane and loss of the intracellular environment. In terms of biological role, a cholesterol-dependent toxin that causes cytolysis by forming pores in cholesterol containing host membranes. After binding to target membranes, the protein undergoes a major conformation change, leading to its insertion in the host membrane and formation of an oligomeric pore complex. Cholesterol is required for binding to host membranes, membrane insertion and pore formation; cholesterol binding is mediated by a Thr-Leu pair in the C-terminus. Acts as a major virulence factor required for the escape of bacteria from phagosomal vacuoles and entry into the host cytosol. Can be reversibly inactivated by oxidation. This chain is Listeriolysin O (hly), found in Listeria monocytogenes serotype 4b (strain F2365).